Consider the following 251-residue polypeptide: 3-deoxy-manno-octulosonate cytidylyltransferase (251 aa).

This sequence belongs to the KdsB family.

The protein localises to the cytoplasm. The catalysed reaction is 3-deoxy-alpha-D-manno-oct-2-ulosonate + CTP = CMP-3-deoxy-beta-D-manno-octulosonate + diphosphate. The protein operates within nucleotide-sugar biosynthesis; CMP-3-deoxy-D-manno-octulosonate biosynthesis; CMP-3-deoxy-D-manno-octulosonate from 3-deoxy-D-manno-octulosonate and CTP: step 1/1. Its pathway is bacterial outer membrane biogenesis; lipopolysaccharide biosynthesis. Functionally, activates KDO (a required 8-carbon sugar) for incorporation into bacterial lipopolysaccharide in Gram-negative bacteria. In Chlorobium luteolum (strain DSM 273 / BCRC 81028 / 2530) (Pelodictyon luteolum), this protein is 3-deoxy-manno-octulosonate cytidylyltransferase.